The chain runs to 306 residues: Protein FdhE homolog (306 aa).

It belongs to the FdhE family.

The protein localises to the cytoplasm. Its function is as follows. Necessary for formate dehydrogenase activity. The sequence is that of Protein FdhE homolog from Proteus mirabilis (strain HI4320).